The chain runs to 711 residues: MQRTLSKVILNSGKNNLLKSSNLLNSNLLKATTTNIIGIKTINNNNNVNSIIGFKSLNKRYFTSNTPKVEEEDDEIAPDEAIKAEEKIKETERVIGLSEKLSFQTETQKILHIVAESLYTEKEVFIRELISNASDAIEKVRHTQLTNASMIEDASIPFEIKISTDEDNKTLIIQDSGIGMTKDEMIKNLGKIGYSGSSDFIKKLGENPDKASIIGQFGVGFYSCFMVGHTIKIYTKSATPGSKGYLWESDGTGSYSITEAEGVSRGTKIIIHLKPSSYEYSKKSIVENIIKKYSNFVGFPIALNGTTVNTIKPLWTLNKNAISEEEHKEFYQFLSKSYDTPSYRVHFSTDTPLSIRSIFYIPSQHMEKYGMGKMEPGVSLFSRKVLIQQKANGILPEWMRFVRGVVDSEDIPLNVSREHLQDNGLIQRISSVLVKRILKHLNDEAKSDPEKFNVFMTEFGGFFKEGIITDFKWKDEISKLLRFESSNGSTASKTDAVSLEQYVSRMKPEQKNIYFLSVPNRAVGLSSPYYEPFQLKDIEVIFLYNAVDEFVLTNVGHFGDKKIVSVESKEAEEFLATNQDKKTETLSQDEIDKFLSWVSTVASDKVTQAKSTTRSISSPAIIIDHESANFRRMLKMVEPGKQHETPKQVVEFNMNHPIILKLVQQTESNPTIAKLVIDQVVDNAFVSAGLIEDNREMIPRINQLLDSLLTK.

The transit peptide at Met-1 to Phe-62 directs the protein to the mitochondrion. Asn-132, Asp-175, Asn-188, Phe-221, and Arg-417 together coordinate ATP. The tract at residues Leu-303–Lys-711 is dimerization.

Belongs to the heat shock protein 90 family.

It localises to the cytoplasm. The protein resides in the cell cortex. Its subcellular location is the cytoskeleton. It is found in the mitochondrion. The protein localises to the spore. It localises to the perispore. The protein resides in the nucleus. Its subcellular location is the nucleolus. Its function is as follows. Chaperone that expresses an ATPase activity. This chain is TNF receptor-associated protein 1 homolog, mitochondrial (trap1), found in Dictyostelium discoideum (Social amoeba).